The primary structure comprises 366 residues: Tetraacyldisaccharide 4'-kinase (366 aa).

Residue 62-69 (RVGGTGKT) participates in ATP binding.

The protein belongs to the LpxK family.

The enzyme catalyses a lipid A disaccharide + ATP = a lipid IVA + ADP + H(+). It functions in the pathway glycolipid biosynthesis; lipid IV(A) biosynthesis; lipid IV(A) from (3R)-3-hydroxytetradecanoyl-[acyl-carrier-protein] and UDP-N-acetyl-alpha-D-glucosamine: step 6/6. Transfers the gamma-phosphate of ATP to the 4'-position of a tetraacyldisaccharide 1-phosphate intermediate (termed DS-1-P) to form tetraacyldisaccharide 1,4'-bis-phosphate (lipid IVA). This Polynucleobacter necessarius subsp. necessarius (strain STIR1) protein is Tetraacyldisaccharide 4'-kinase.